The chain runs to 72 residues: Cytochrome c oxidase subunit 8C, mitochondrial (72 aa).

The N-terminal 29 residues, 1 to 29 (MSRLLLLCSSLLRHRAVLFSKPGHPGRLS), are a transit peptide targeting the mitochondrion. Topologically, residues 30–40 (HSESPQKKILS) are mitochondrial matrix. The helical transmembrane segment at 41-64 (PTESAVGIVVFFTTFYIPAAYVLS) threads the bilayer. The Mitochondrial intermembrane portion of the chain corresponds to 65 to 72 (SLKYFKGE).

Belongs to the cytochrome c oxidase VIII family. Component of the cytochrome c oxidase (complex IV, CIV), a multisubunit enzyme composed of 14 subunits. The complex is composed of a catalytic core of 3 subunits MT-CO1, MT-CO2 and MT-CO3, encoded in the mitochondrial DNA, and 11 supernumerary subunits COX4I, COX5A, COX5B, COX6A, COX6B, COX6C, COX7A, COX7B, COX7C, COX8 and NDUFA4, which are encoded in the nuclear genome. The complex exists as a monomer or a dimer and forms supercomplexes (SCs) in the inner mitochondrial membrane with NADH-ubiquinone oxidoreductase (complex I, CI) and ubiquinol-cytochrome c oxidoreductase (cytochrome b-c1 complex, complex III, CIII), resulting in different assemblies (supercomplex SCI(1)III(2)IV(1) and megacomplex MCI(2)III(2)IV(2)).

The protein localises to the mitochondrion inner membrane. Its pathway is energy metabolism; oxidative phosphorylation. In terms of biological role, component of the cytochrome c oxidase, the last enzyme in the mitochondrial electron transport chain which drives oxidative phosphorylation. The respiratory chain contains 3 multisubunit complexes succinate dehydrogenase (complex II, CII), ubiquinol-cytochrome c oxidoreductase (cytochrome b-c1 complex, complex III, CIII) and cytochrome c oxidase (complex IV, CIV), that cooperate to transfer electrons derived from NADH and succinate to molecular oxygen, creating an electrochemical gradient over the inner membrane that drives transmembrane transport and the ATP synthase. Cytochrome c oxidase is the component of the respiratory chain that catalyzes the reduction of oxygen to water. Electrons originating from reduced cytochrome c in the intermembrane space (IMS) are transferred via the dinuclear copper A center (CU(A)) of subunit 2 and heme A of subunit 1 to the active site in subunit 1, a binuclear center (BNC) formed by heme A3 and copper B (CU(B)). The BNC reduces molecular oxygen to 2 water molecules using 4 electrons from cytochrome c in the IMS and 4 protons from the mitochondrial matrix. This chain is Cytochrome c oxidase subunit 8C, mitochondrial (Cox8c), found in Mus musculus (Mouse).